The following is a 174-amino-acid chain: Crossover junction endodeoxyribonuclease RuvC (174 aa).

Active-site residues include Asp-8, Glu-69, and Asp-141. Residues Asp-8, Glu-69, and Asp-141 each coordinate Mg(2+).

It belongs to the RuvC family. In terms of assembly, homodimer which binds Holliday junction (HJ) DNA. The HJ becomes 2-fold symmetrical on binding to RuvC with unstacked arms; it has a different conformation from HJ DNA in complex with RuvA. In the full resolvosome a probable DNA-RuvA(4)-RuvB(12)-RuvC(2) complex forms which resolves the HJ. It depends on Mg(2+) as a cofactor.

It localises to the cytoplasm. The enzyme catalyses Endonucleolytic cleavage at a junction such as a reciprocal single-stranded crossover between two homologous DNA duplexes (Holliday junction).. Its function is as follows. The RuvA-RuvB-RuvC complex processes Holliday junction (HJ) DNA during genetic recombination and DNA repair. Endonuclease that resolves HJ intermediates. Cleaves cruciform DNA by making single-stranded nicks across the HJ at symmetrical positions within the homologous arms, yielding a 5'-phosphate and a 3'-hydroxyl group; requires a central core of homology in the junction. The consensus cleavage sequence is 5'-(A/T)TT(C/G)-3'. Cleavage occurs on the 3'-side of the TT dinucleotide at the point of strand exchange. HJ branch migration catalyzed by RuvA-RuvB allows RuvC to scan DNA until it finds its consensus sequence, where it cleaves and resolves the cruciform DNA. The chain is Crossover junction endodeoxyribonuclease RuvC from Xanthomonas euvesicatoria pv. vesicatoria (strain 85-10) (Xanthomonas campestris pv. vesicatoria).